The sequence spans 263 residues: 4-hydroxy-tetrahydrodipicolinate reductase (263 aa).

Residues 7–12 (GFKGRM), 96–98 (GTT), and 122–125 (APNF) each bind NAD(+). Histidine 152 acts as the Proton donor/acceptor in catalysis. Residue histidine 153 coordinates (S)-2,3,4,5-tetrahydrodipicolinate. Catalysis depends on lysine 156, which acts as the Proton donor. Position 162 to 163 (162 to 163 (GT)) interacts with (S)-2,3,4,5-tetrahydrodipicolinate.

It belongs to the DapB family.

It localises to the cytoplasm. It carries out the reaction (S)-2,3,4,5-tetrahydrodipicolinate + NAD(+) + H2O = (2S,4S)-4-hydroxy-2,3,4,5-tetrahydrodipicolinate + NADH + H(+). The catalysed reaction is (S)-2,3,4,5-tetrahydrodipicolinate + NADP(+) + H2O = (2S,4S)-4-hydroxy-2,3,4,5-tetrahydrodipicolinate + NADPH + H(+). The protein operates within amino-acid biosynthesis; L-lysine biosynthesis via DAP pathway; (S)-tetrahydrodipicolinate from L-aspartate: step 4/4. Its function is as follows. Catalyzes the conversion of 4-hydroxy-tetrahydrodipicolinate (HTPA) to tetrahydrodipicolinate. The chain is 4-hydroxy-tetrahydrodipicolinate reductase from Listeria monocytogenes serotype 4b (strain CLIP80459).